The following is a 249-amino-acid chain: 2,3-bisphosphoglycerate-dependent phosphoglycerate mutase (249 aa).

Residues 8–15 (RHGESTWN), 21–22 (TG), arginine 60, 87–90 (ERHY), lysine 98, 114–115 (RR), and 183–184 (GN) contribute to the substrate site. The active-site Tele-phosphohistidine intermediate is the histidine 9. Glutamate 87 serves as the catalytic Proton donor/acceptor.

Belongs to the phosphoglycerate mutase family. BPG-dependent PGAM subfamily.

It carries out the reaction (2R)-2-phosphoglycerate = (2R)-3-phosphoglycerate. Its pathway is carbohydrate degradation; glycolysis; pyruvate from D-glyceraldehyde 3-phosphate: step 3/5. Catalyzes the interconversion of 2-phosphoglycerate and 3-phosphoglycerate. This Methanoregula boonei (strain DSM 21154 / JCM 14090 / 6A8) protein is 2,3-bisphosphoglycerate-dependent phosphoglycerate mutase.